Here is a 191-residue protein sequence, read N- to C-terminus: Thymidine kinase (191 aa).

Residues G15–T22 and D88–Q91 contribute to the ATP site. E89 serves as the catalytic Proton acceptor. Positions 145, 148, 183, and 186 each coordinate Zn(2+).

It belongs to the thymidine kinase family. In terms of assembly, homotetramer.

The protein localises to the cytoplasm. The enzyme catalyses thymidine + ATP = dTMP + ADP + H(+). This chain is Thymidine kinase, found in Clostridium botulinum (strain Hall / ATCC 3502 / NCTC 13319 / Type A).